A 411-amino-acid polypeptide reads, in one-letter code: Serine--tRNA ligase (411 aa).

226–228 (TSE) contributes to the L-serine binding site. 257 to 259 (RKE) is an ATP binding site. Glu280 is a binding site for L-serine. 344–347 (EISS) is a binding site for ATP. L-serine is bound at residue Ser379.

This sequence belongs to the class-II aminoacyl-tRNA synthetase family. Type-1 seryl-tRNA synthetase subfamily. In terms of assembly, homodimer. The tRNA molecule binds across the dimer.

The protein resides in the cytoplasm. The enzyme catalyses tRNA(Ser) + L-serine + ATP = L-seryl-tRNA(Ser) + AMP + diphosphate + H(+). The catalysed reaction is tRNA(Sec) + L-serine + ATP = L-seryl-tRNA(Sec) + AMP + diphosphate + H(+). Its pathway is aminoacyl-tRNA biosynthesis; selenocysteinyl-tRNA(Sec) biosynthesis; L-seryl-tRNA(Sec) from L-serine and tRNA(Sec): step 1/1. Functionally, catalyzes the attachment of serine to tRNA(Ser). Is also able to aminoacylate tRNA(Sec) with serine, to form the misacylated tRNA L-seryl-tRNA(Sec), which will be further converted into selenocysteinyl-tRNA(Sec). This Campylobacter jejuni subsp. jejuni serotype O:2 (strain ATCC 700819 / NCTC 11168) protein is Serine--tRNA ligase.